Here is a 235-residue protein sequence, read N- to C-terminus: Probable ribosomal RNA small subunit methyltransferase A (235 aa).

Positions 9, 11, 34, 55, 78, and 93 each coordinate S-adenosyl-L-methionine.

Belongs to the class I-like SAM-binding methyltransferase superfamily. rRNA adenine N(6)-methyltransferase family. RsmA subfamily.

It localises to the cytoplasm. Its function is as follows. Specifically dimethylates two adjacent adenosines in the loop of a conserved hairpin near the 3'-end of 16S rRNA in the 30S particle. May play a critical role in biogenesis of 30S subunits. The protein is Probable ribosomal RNA small subunit methyltransferase A of Pyrobaculum islandicum (strain DSM 4184 / JCM 9189 / GEO3).